Reading from the N-terminus, the 417-residue chain is Serine hydroxymethyltransferase (417 aa).

(6S)-5,6,7,8-tetrahydrofolate-binding positions include Leu-121 and 125 to 127; that span reads GHL. An N6-(pyridoxal phosphate)lysine modification is found at Lys-229. Residue 355–357 participates in (6S)-5,6,7,8-tetrahydrofolate binding; it reads SPF.

This sequence belongs to the SHMT family. As to quaternary structure, homodimer. It depends on pyridoxal 5'-phosphate as a cofactor.

It is found in the cytoplasm. The catalysed reaction is (6R)-5,10-methylene-5,6,7,8-tetrahydrofolate + glycine + H2O = (6S)-5,6,7,8-tetrahydrofolate + L-serine. Its pathway is one-carbon metabolism; tetrahydrofolate interconversion. It participates in amino-acid biosynthesis; glycine biosynthesis; glycine from L-serine: step 1/1. Functionally, catalyzes the reversible interconversion of serine and glycine with tetrahydrofolate (THF) serving as the one-carbon carrier. This reaction serves as the major source of one-carbon groups required for the biosynthesis of purines, thymidylate, methionine, and other important biomolecules. Also exhibits THF-independent aldolase activity toward beta-hydroxyamino acids, producing glycine and aldehydes, via a retro-aldol mechanism. The sequence is that of Serine hydroxymethyltransferase from Shewanella oneidensis (strain ATCC 700550 / JCM 31522 / CIP 106686 / LMG 19005 / NCIMB 14063 / MR-1).